The following is a 526-amino-acid chain: uncharacterized protein (526 aa).

WD repeat units lie at residues 210-248 (SMEQ…HHDT) and 452-491 (SHNS…LIDS).

This is an uncharacterized protein from Acanthamoeba polyphaga mimivirus (APMV).